Here is a 414-residue protein sequence, read N- to C-terminus: Succinylornithine transaminase (414 aa).

K260 is subject to N6-(pyridoxal phosphate)lysine.

This sequence belongs to the class-III pyridoxal-phosphate-dependent aminotransferase family. AstC subfamily. Pyridoxal 5'-phosphate is required as a cofactor.

It carries out the reaction N(2)-succinyl-L-ornithine + 2-oxoglutarate = N-succinyl-L-glutamate 5-semialdehyde + L-glutamate. Its pathway is amino-acid degradation; L-arginine degradation via AST pathway; L-glutamate and succinate from L-arginine: step 3/5. Its function is as follows. Catalyzes the transamination of N(2)-succinylornithine and alpha-ketoglutarate into N(2)-succinylglutamate semialdehyde and glutamate. Can also act as an acetylornithine aminotransferase. The sequence is that of Succinylornithine transaminase from Yersinia pseudotuberculosis serotype O:1b (strain IP 31758).